The following is a 186-amino-acid chain: dCTP deaminase (186 aa).

DCTP is bound at residue 107-112 (KSSYAR). Residue Glu133 is the Proton donor/acceptor of the active site. Positions 152, 166, and 176 each coordinate dCTP.

This sequence belongs to the dCTP deaminase family. In terms of assembly, homotrimer.

The catalysed reaction is dCTP + H2O + H(+) = dUTP + NH4(+). The protein operates within pyrimidine metabolism; dUMP biosynthesis; dUMP from dCTP (dUTP route): step 1/2. Its function is as follows. Catalyzes the deamination of dCTP to dUTP. This Chloroflexus aurantiacus (strain ATCC 29366 / DSM 635 / J-10-fl) protein is dCTP deaminase.